The chain runs to 83 residues: RNA-binding protein Hfq (83 aa).

Residues 10–70 (DAFLNQVRKE…ISTVSPLKPV (61 aa)) form the Sm domain.

This sequence belongs to the Hfq family. In terms of assembly, homohexamer.

Its function is as follows. RNA chaperone that binds small regulatory RNA (sRNAs) and mRNAs to facilitate mRNA translational regulation in response to envelope stress, environmental stress and changes in metabolite concentrations. Also binds with high specificity to tRNAs. In Pelotomaculum thermopropionicum (strain DSM 13744 / JCM 10971 / SI), this protein is RNA-binding protein Hfq.